A 198-amino-acid chain; its full sequence is V-type ATP synthase subunit E 1 (198 aa).

Belongs to the V-ATPase E subunit family.

Produces ATP from ADP in the presence of a proton gradient across the membrane. The sequence is that of V-type ATP synthase subunit E 1 from Clostridium tetani (strain Massachusetts / E88).